The chain runs to 38 residues: Large ribosomal subunit protein bL36 (38 aa).

The protein belongs to the bacterial ribosomal protein bL36 family.

This is Large ribosomal subunit protein bL36 from Roseiflexus sp. (strain RS-1).